A 221-amino-acid chain; its full sequence is Crossover junction endodeoxyribonuclease RuvC (221 aa).

Catalysis depends on residues aspartate 12, glutamate 73, and aspartate 146. Residues aspartate 12, glutamate 73, and aspartate 146 each contribute to the Mg(2+) site. Residues 169–221 (SQYSEQELEKRRRVQQGKLGKAKSTYNAEQAQSHASDPAKAAHPSQFQRTDTN) are disordered. A compositionally biased stretch (polar residues) spans 192–203 (STYNAEQAQSHA).

Belongs to the RuvC family. As to quaternary structure, homodimer which binds Holliday junction (HJ) DNA. The HJ becomes 2-fold symmetrical on binding to RuvC with unstacked arms; it has a different conformation from HJ DNA in complex with RuvA. In the full resolvosome a probable DNA-RuvA(4)-RuvB(12)-RuvC(2) complex forms which resolves the HJ. The cofactor is Mg(2+).

It localises to the cytoplasm. The enzyme catalyses Endonucleolytic cleavage at a junction such as a reciprocal single-stranded crossover between two homologous DNA duplexes (Holliday junction).. The RuvA-RuvB-RuvC complex processes Holliday junction (HJ) DNA during genetic recombination and DNA repair. Endonuclease that resolves HJ intermediates. Cleaves cruciform DNA by making single-stranded nicks across the HJ at symmetrical positions within the homologous arms, yielding a 5'-phosphate and a 3'-hydroxyl group; requires a central core of homology in the junction. The consensus cleavage sequence is 5'-(A/T)TT(C/G)-3'. Cleavage occurs on the 3'-side of the TT dinucleotide at the point of strand exchange. HJ branch migration catalyzed by RuvA-RuvB allows RuvC to scan DNA until it finds its consensus sequence, where it cleaves and resolves the cruciform DNA. The chain is Crossover junction endodeoxyribonuclease RuvC from Corynebacterium glutamicum (strain ATCC 13032 / DSM 20300 / JCM 1318 / BCRC 11384 / CCUG 27702 / LMG 3730 / NBRC 12168 / NCIMB 10025 / NRRL B-2784 / 534).